A 430-amino-acid chain; its full sequence is Adenylosuccinate synthetase (430 aa).

GTP-binding positions include 12–18 (GDEGKGK) and 40–42 (GHT). Aspartate 13 (proton acceptor) is an active-site residue. 2 residues coordinate Mg(2+): aspartate 13 and glycine 40. IMP-binding positions include 13–16 (DEGK), 38–41 (NAGH), threonine 128, arginine 142, glutamine 223, threonine 238, and arginine 302. Histidine 41 (proton donor) is an active-site residue. Position 298 to 304 (298 to 304 (TTTGRPR)) interacts with substrate. Residues arginine 304, 330–332 (CID), and 412–414 (SVG) each bind GTP.

It belongs to the adenylosuccinate synthetase family. In terms of assembly, homodimer. The cofactor is Mg(2+).

The protein localises to the cytoplasm. The enzyme catalyses IMP + L-aspartate + GTP = N(6)-(1,2-dicarboxyethyl)-AMP + GDP + phosphate + 2 H(+). It participates in purine metabolism; AMP biosynthesis via de novo pathway; AMP from IMP: step 1/2. Its function is as follows. Plays an important role in the de novo pathway of purine nucleotide biosynthesis. Catalyzes the first committed step in the biosynthesis of AMP from IMP. This chain is Adenylosuccinate synthetase, found in Streptococcus thermophilus (strain CNRZ 1066).